The primary structure comprises 185 residues: Crossover junction endodeoxyribonuclease RuvC (185 aa).

Catalysis depends on residues Asp-7, Glu-68, and Asp-141. 3 residues coordinate Mg(2+): Asp-7, Glu-68, and Asp-141.

This sequence belongs to the RuvC family. Homodimer which binds Holliday junction (HJ) DNA. The HJ becomes 2-fold symmetrical on binding to RuvC with unstacked arms; it has a different conformation from HJ DNA in complex with RuvA. In the full resolvosome a probable DNA-RuvA(4)-RuvB(12)-RuvC(2) complex forms which resolves the HJ. Mg(2+) serves as cofactor.

Its subcellular location is the cytoplasm. It carries out the reaction Endonucleolytic cleavage at a junction such as a reciprocal single-stranded crossover between two homologous DNA duplexes (Holliday junction).. In terms of biological role, the RuvA-RuvB-RuvC complex processes Holliday junction (HJ) DNA during genetic recombination and DNA repair. Endonuclease that resolves HJ intermediates. Cleaves cruciform DNA by making single-stranded nicks across the HJ at symmetrical positions within the homologous arms, yielding a 5'-phosphate and a 3'-hydroxyl group; requires a central core of homology in the junction. The consensus cleavage sequence is 5'-(A/T)TT(C/G)-3'. Cleavage occurs on the 3'-side of the TT dinucleotide at the point of strand exchange. HJ branch migration catalyzed by RuvA-RuvB allows RuvC to scan DNA until it finds its consensus sequence, where it cleaves and resolves the cruciform DNA. The chain is Crossover junction endodeoxyribonuclease RuvC from Mycolicibacterium smegmatis (strain ATCC 700084 / mc(2)155) (Mycobacterium smegmatis).